The primary structure comprises 471 residues: T-box transcription factor T (471 aa).

Residues 24 to 196 (LWTKFCSLTN…HNPFAKAFLD (173 aa)) constitute a DNA-binding region (T-box).

As to expression, developing notochord.

It is found in the nucleus. Its function is as follows. Involved in the transcriptional regulation of genes required for mesoderm differentiation. This chain is T-box transcription factor T, found in Halocynthia roretzi (Sea squirt).